Here is a 2641-residue protein sequence, read N- to C-terminus: Prosolanapyrone synthase (2641 aa).

In terms of domain architecture, Ketosynthase family 3 (KS3) spans 14-440; it reads PEPIAIVGMG…GANGHCIIDD (427 aa). Catalysis depends on for beta-ketoacyl synthase activity residues Cys187, His323, and His363. The tract at residues 456 to 515 is disordered; the sequence is SIGHINGHTNGHTNGHTNGHTNGHTNGHTNGHTNGAHASDGHNGHHQNGMNGNSASHMSE. Over residues 461–490 the composition is skewed to low complexity; sequence NGHTNGHTNGHTNGHTNGHTNGHTNGHTNG. The segment at 619–920 is malonyl-CoA:ACP transacylase (MAT); the sequence is FVFTGQGAQW…KGPVGQISRS (302 aa). The interval 1011–1149 is N-terminal hotdog fold; the sequence is HDLLGSKLPG…GRVRVIAGTS (139 aa). Residues 1011 to 1309 are dehydratase (DH) domain; it reads HDLLGSKLPG…GNLRCVTYTE (299 aa). A PKS/mFAS DH domain is found at 1011–1313; sequence HDLLGSKLPG…CVTYTEVLPS (303 aa). His1043 functions as the Proton acceptor; for dehydratase activity in the catalytic mechanism. Residues 1161–1313 are C-terminal hotdog fold; sequence ARTLDTKAWY…CVTYTEVLPS (153 aa). Asp1227 functions as the Proton donor; for dehydratase activity in the catalytic mechanism. Positions 1477-1665 are methyltransferase (MT) domain; sequence TGAYPQLVRF…GAELVLDDYP (189 aa). An enoyl reductase (ER) domain region spans residues 1894–2206; the sequence is GLLTSLYFKP…KGTHVGKLVV (313 aa). The interval 2231-2408 is ketoreductase (KR) domain; it reads NYLITGGLGG…STVSFGLIRD (178 aa). The region spanning 2561-2639 is the Carrier domain; sequence RTVALVTDAI…ILANKIVDGA (79 aa). The residue at position 2598 (Ser2598) is an O-(pantetheine 4'-phosphoryl)serine.

The protein operates within phytotoxin biosynthesis. Prosolanapyrone synthase; part of the gene cluster that mediates the biosynthesis of the phytotoxin solanapyrone, a causal agent of early blight disease of potato and tomato. The prosolanapyrone synthase sol1 is a polyketide synthase that produces the octaketide desmethylprosolanapyrone I via sequential condensations of 7 malonyl-CoA units with one acetyl-CoA unit, and one methylation step. The octaketide backbone is further methylated by the sol2 O-methyltransferase to yield prosolanapyrone I. Prosolanapyrone I is hydroxylated to prosolanapyrone II by the cytochrome P450 monooxygenase sol6. The solanapyrone synthase sol5 then catalyzes the oxidation of prosolanapyrone II and the subsequent Diels Alder cycloisomerization of the product prosolanapyrone III to solanapyrones A and D. Solanapyrones A and D are then converted into solanapyrones B and E, respectively, by the sol3 dehydrogenase. The polypeptide is Prosolanapyrone synthase (sol1) (Alternaria solani).